A 399-amino-acid chain; its full sequence is MLRWLTAGESHGPALIGIVEGVPAGVELTSGQIRDALARRRLGYGRGARMKFEQDEVTIMGGVRHGLTQGGPVAIQVGNTEWPKWEQIMSADPVDPEVLADQARNAPLTRPRPGHADFTGMQKYGFDEARPVLERASARETATRVALGTVAAQFLKQLGIELVSHTVSIASVTVPEGRPLPLPKDVIALDADPLRCFDRETSNAMVAEVDAAHKEGETLGGVVEVLAYGLPPGLGSYVHWDRRLDSRLAAALMGIQAIKGVEVGDGFLTAARRGSAAHDEILKDENGKIVRQTNRAGGIEGGMSIGEVLRVRAAMKPIATVPRALRTIDVSTGEPAKAHHQRSDVCAVPAAGVVAEAMVALVLAEAVAEKFGGDSVPETQRNLQSYLESIPATLDSVGR.

NADP(+)-binding residues include arginine 40 and arginine 46. Residues 135 to 137 (RAS), 256 to 257 (QA), glycine 301, 316 to 320 (KPIAT), and arginine 342 contribute to the FMN site.

This sequence belongs to the chorismate synthase family. Homotetramer. The cofactor is FMNH2.

It carries out the reaction 5-O-(1-carboxyvinyl)-3-phosphoshikimate = chorismate + phosphate. It functions in the pathway metabolic intermediate biosynthesis; chorismate biosynthesis; chorismate from D-erythrose 4-phosphate and phosphoenolpyruvate: step 7/7. In terms of biological role, catalyzes the anti-1,4-elimination of the C-3 phosphate and the C-6 proR hydrogen from 5-enolpyruvylshikimate-3-phosphate (EPSP) to yield chorismate, which is the branch point compound that serves as the starting substrate for the three terminal pathways of aromatic amino acid biosynthesis. This reaction introduces a second double bond into the aromatic ring system. This Paenarthrobacter aurescens (strain TC1) protein is Chorismate synthase.